Consider the following 167-residue polypeptide: Small ribosomal subunit protein uS5 (167 aa).

Residues 12–75 (LEDNVVAINR…EAARKNLIEV (64 aa)) form the S5 DRBM domain.

It belongs to the universal ribosomal protein uS5 family. As to quaternary structure, part of the 30S ribosomal subunit. Contacts proteins S4 and S8.

With S4 and S12 plays an important role in translational accuracy. In terms of biological role, located at the back of the 30S subunit body where it stabilizes the conformation of the head with respect to the body. This chain is Small ribosomal subunit protein uS5, found in Levilactobacillus brevis (strain ATCC 367 / BCRC 12310 / CIP 105137 / JCM 1170 / LMG 11437 / NCIMB 947 / NCTC 947) (Lactobacillus brevis).